Here is a 38-residue protein sequence, read N- to C-terminus: Potassium channel toxin alpha-KTx 2.15 (38 aa).

3 disulfide bridges follow: Cys-7–Cys-29, Cys-13–Cys-34, and Cys-17–Cys-36.

The protein belongs to the short scorpion toxin superfamily. Potassium channel inhibitor family. Alpha-KTx 02 subfamily. In terms of tissue distribution, expressed by the venom gland.

The protein localises to the secreted. Its function is as follows. Blocks human voltage-gated potassium channels Kv1.2/KCNA2 (IC(50)=0.3 nM), Kv1.3/KCNA3 (IC(50)=8.3 nM) and Shaker IR (with inactivation domain removed) (IC(50)=12 nM) and blocks intermediate conductance calcium-activated potassium channel KCa3.1/KCNN4 (IC(50)=6.4 nM). The protein is Potassium channel toxin alpha-KTx 2.15 of Centruroides tecomanus (Scorpion).